The primary structure comprises 144 residues: Large ribosomal subunit protein uL16 (144 aa).

Belongs to the universal ribosomal protein uL16 family. As to quaternary structure, part of the 50S ribosomal subunit.

In terms of biological role, binds 23S rRNA and is also seen to make contacts with the A and possibly P site tRNAs. The polypeptide is Large ribosomal subunit protein uL16 (Lactiplantibacillus plantarum (strain ATCC BAA-793 / NCIMB 8826 / WCFS1) (Lactobacillus plantarum)).